The primary structure comprises 308 residues: Probable manganese-dependent inorganic pyrophosphatase (308 aa).

Mn(2+) contacts are provided by histidine 9, aspartate 13, aspartate 15, aspartate 75, histidine 97, and aspartate 149.

It belongs to the PPase class C family. Requires Mn(2+) as cofactor.

The protein localises to the cytoplasm. The catalysed reaction is diphosphate + H2O = 2 phosphate + H(+). In Staphylococcus carnosus (strain TM300), this protein is Probable manganese-dependent inorganic pyrophosphatase.